A 1945-amino-acid chain; its full sequence is MMATHWTGLPEEDGDKLKACGAASACEVSKNKDGKDQGEPVSPSEDEPFSWPGPKTVMLKRTSQGFGFTLRHFIVYPPESAIQFSYKDEENGNRGGKQRNRLEPMDTIFVKQVKEGGPAFEAGLCTGDRIIKVNGESVIGKTYSQVIALIQNSDTTLELSVMPKDEDILQVAYSQDAYLKGNEAYSGNARNIPEPPPVCYPWLPSTPSATAQPVETCPPDSLPNKQQTSAPVLTQPGRAYRMEIQVPPSPTDVAKSNTAVCVCNESVRTVIVPSEKVVDLLANRNNPSGPSHRTEEVRYGVNEQASTKAASRTTSPASVPTAHLIHQTTGSRSLEPSGILLKSGNYSGHSEGISSSRSQAVDSPPVSVNHYSANSHQHIDWKNYKTYKEYIDNRRLHIGCRTIQERLDSLRAASQSAADYNQVVPTRTTLQVRRRSTSHDRVPQSVQIRQRSVSQERLEDSVLMKYCPRSASQGALTSPPVSFNNHRTRSWDYIEGQTEATATVNSESQIPDSNGERKQTYKWSGFTEQDDRRGIHERPRQQEMHKPFRGSNLTVAPVVNSDNRRLVGRGVGPVSQFKKIPPDLRPPHSNRNFPTTTGVSLQRGIAQDRSPLVKVRSNSLKVPPPPVSKPSFSQHSLASMKDQRPVNHLHQHSVLSQQTQFRSESTFEHQLETEVSSCLPGTSAKTSPQLSENLGTSDLELPAIPRNGDINLQEAEIQQPDVLDNKESVILREKPQSGRQTPQPLRHQSYILAVNDQETGSDTTCWLPNDARREVHIKRMEERKASSTSPPGDSLASIPFIDEPTSPSIDHEIAHIPASAVISASTAHVPSIATVPPSLTTSAPLIRRQLSHDQESVGPPSLDGQHSSKTERSKSYDEGLDDYREDAKLSFKHVSSLKGIKITDSQKSSEDSGSRKGSSSEVFSDAAREGWLQFRPLVTDKGKRVGGSIRPWKQMYVVLRGHSLYLYKDRREQTTPSEEEQPISVNACLIDISYSETKRRNVFRLTTSDCECLFQAEDRDDMLSWIKTIQESSNLNEEDTGVTNRDLISRRIKEYNSLLSKTEQLPKTPRQSLSIRQTLLGAKSEPKTQSPHSPKEESERKLLSKDDTSPPKDKGTWRRGIPSIVRKTFEKKPAATGTFGVRLDDCPPAHTNRYIPLIVDICCKLVEERGLEYTGIYRVPGNNAAISSMQEELNKGMADIDIQDDKWRDLNVISSLLKSFFRKLPEPLFTNDKYADFIEANRKEDPLDRLRTLKRLIHDLPEHHFETLKFLSAHLKTVAENSEKNKMEPRNLAIVFGPTLVRTSEDNMTHMVTHMPDQYKIVETLIQHHDWFFTEEGAEEPLTAVQEENTVDSQPVPNIDHLLTNIGRTGVLPGDVSDSATSDSAKSKGSWGSGKDQYSRELLVSSIFAAASRKRKKPKEKAQPSSSEDELDSVFFKKENTEQSHSEIKEESKRESETSGSKQRVVVAKESNTKKDSGTTKEEKKIPWEEPPPPHSSKRNRSPTLSCRLAMLKEGPRSLLTQKPHCEETGSDSGTLLSTSSQASLLRSSTKKSTSPETKHSEFLSIAGTTTSDYSTTSSTTYLTSLDSSRLSPEVQSVAESKGDEADDERSELVSEGRPVETDSESEFPVFPTTLTSDRLFRGKFQEVARVSRRNSEGSEASCTEGSLTPSLDSRRQQFSSHRLIECDTLSRKKSARFKSDSGSPGDTRTEKETPALAKMFDVMKKGKSTGSLLTPSRSESEKQEATWKTKIADRLKLRPRAPADDMFGVGNQKPTAETAKRKNIKRRHTLGGHRDATEISVLSFWKAHEQSADKESELSAVNRLKPKCSAQDLSISDWLARERVRTSASDLSRGEGLEPQAESPSVLGTPISTHSPPSQQPEARVAATSTLASTSQSPLFTPPQSPDQINRESFQNMSQNASSTANIHPHKQSESPDTKAETPP.

The interval 26 to 53 (CEVSKNKDGKDQGEPVSPSEDEPFSWPG) is disordered. Residues 29 to 38 (SKNKDGKDQG) show a composition bias toward basic and acidic residues. A phosphoserine mark is found at serine 42 and serine 63. The PDZ domain maps to 56–165 (TVMLKRTSQG…TLELSVMPKD (110 aa)). 2 disordered regions span residues 210–229 (TAQP…QQTS) and 326–365 (HQTT…DSPP). The span at 347-358 (SGHSEGISSSRS) shows a compositional bias: low complexity. Serine 454 carries the phosphoserine modification. A compositionally biased stretch (polar residues) spans 499-512 (EATATVNSESQIPD). The interval 499–519 (EATATVNSESQIPDSNGERKQ) is disordered. Arginine 549 and arginine 569 each carry omega-N-methylarginine. Disordered stretches follow at residues 573 to 647 (PVSQ…RPVN) and 674 to 702 (EVSS…LELP). The span at 589 to 600 (SNRNFPTTTGVS) shows a compositional bias: polar residues. Phosphoserine occurs at positions 610 and 619. The segment covering 674–696 (EVSSCLPGTSAKTSPQLSENLGT) has biased composition (polar residues). Residue threonine 741 is modified to Phosphothreonine. Residues serine 851, serine 856, and serine 875 each carry the phosphoserine modification. Disordered stretches follow at residues 852-879 (HDQE…YDEG) and 902-921 (ITDS…SSSE). Positions 866–879 (HSSKTERSKSYDEG) are enriched in basic and acidic residues. A Phosphotyrosine modification is found at tyrosine 876. 5 positions are modified to phosphoserine: serine 918, serine 920, serine 948, serine 1093, and serine 1109. Residues 924 to 1091 (SDAAREGWLQ…AKSEPKTQSP (168 aa)) form an interaction with ARF1 and ARF6 region. The 110-residue stretch at 925–1034 (DAAREGWLQF…WIKTIQESSN (110 aa)) folds into the PH domain. The interval 1080 to 1120 (LGAKSEPKTQSPHSPKEESERKLLSKDDTSPPKDKGTWRRG) is disordered. Residues 1093–1116 (SPKEESERKLLSKDDTSPPKDKGT) are compositionally biased toward basic and acidic residues. Residues 1141–1333 (VRLDDCPPAH…TLIQHHDWFF (193 aa)) enclose the Rho-GAP domain. Disordered regions lie at residues 1373 to 1396 (PGDV…SGKD), 1412 to 1632 (SRKR…PVFP), 1649 to 1794 (ARVS…LGGH), and 1846 to 1945 (RTSA…ETPP). Residues 1377 to 1395 (SDSATSDSAKSKGSWGSGK) are compositionally biased toward low complexity. Phosphoserine is present on residues serine 1412, serine 1426, and serine 1427. 2 stretches are compositionally biased toward basic and acidic residues: residues 1435 to 1457 (FFKK…RESE) and 1471 to 1488 (SNTK…KIPW). Residue lysine 1438 forms a Glycyl lysine isopeptide (Lys-Gly) (interchain with G-Cter in SUMO) linkage. The residue at position 1504 (threonine 1504) is a Phosphothreonine. Composition is skewed to low complexity over residues 1531-1556 (SDSG…STSP) and 1569-1589 (TTTS…LDSS). Residues 1579-1848 (STTYLTSLDS…WLARERVRTS (270 aa)) form an interaction with CTNNA1 region. Residues 1590–1599 (RLSPEVQSVA) are compositionally biased toward polar residues. The segment covering 1611–1621 (SELVSEGRPVE) has biased composition (basic and acidic residues). Residue serine 1656 is modified to Phosphoserine. 2 stretches are compositionally biased toward polar residues: residues 1658-1681 (GSEA…QFSS) and 1729-1738 (STGSLLTPSR). A Phosphothreonine modification is found at threonine 1669. Phosphoserine is present on serine 1729. Basic and acidic residues predominate over residues 1739–1757 (SESEKQEATWKTKIADRLK). Basic residues predominate over residues 1782–1792 (RKNIKRRHTLG). A compositionally biased stretch (polar residues) spans 1871 to 1882 (PISTHSPPSQQP). A compositionally biased stretch (low complexity) spans 1887–1896 (AATSTLASTS). Threonine 1902 is modified (phosphothreonine). The residue at position 1906 (serine 1906) is a Phosphoserine. A compositionally biased stretch (polar residues) spans 1907–1927 (PDQINRESFQNMSQNASSTAN). Positions 1932–1945 (KQSESPDTKAETPP) are enriched in basic and acidic residues.

As to quaternary structure, interacts with CTNNA1. Interacts with GTP-bound ARF1 and probably ARF6. Post-translationally, sumoylated with SUMO2 and SUMO3 in proliferating lymphocytes.

It localises to the golgi apparatus membrane. The protein resides in the cell junction. The protein localises to the cytoplasmic vesicle membrane. Its subcellular location is the cytoplasm. It is found in the cytoskeleton. Functionally, functions as a GTPase-activating protein (GAP) for RHOA and CDC42. Downstream partner of ARF1 which may control Golgi apparatus structure and function. Also required for CTNNA1 recruitment to adherens junctions. The polypeptide is Rho GTPase-activating protein 21 (Mus musculus (Mouse)).